The primary structure comprises 670 residues: ATP-dependent RNA helicase DDX18 (670 aa).

2 stretches are compositionally biased toward polar residues: residues S31 to D42 and V83 to S105. The segment at S31 to G169 is disordered. A compositionally biased stretch (basic and acidic residues) spans M117 to P154. Residues F179–H207 carry the Q motif motif. The region spanning I210–Y385 is the Helicase ATP-binding domain. An ATP-binding site is contributed by A223–T230. The DEAD box signature appears at D333–D336. The region spanning G399–I569 is the Helicase C-terminal domain.

This sequence belongs to the DEAD box helicase family. DDX18/HAS1 subfamily. In terms of assembly, interacts with NOL8; the interaction is RNA-dependent. Interacts with PRC2 complex components EZH2, SUZ2 and JARID2; these interactions prevent deposition of the repressive H3K27me3 mark onto rDNA in pluripotent cells.

The protein resides in the nucleus. It is found in the nucleolus. It localises to the chromosome. The catalysed reaction is ATP + H2O = ADP + phosphate + H(+). Functionally, ATP-dependent RNA helicase that plays a role in the regulation of R-loop homeostasis in both endogenous R-loop-prone regions and at sites of DNA damage. At endogenous loci such as actively transcribed genes, may act as a helicase to resolve the formation of R-loop during transcription and prevent the interference of R-loop with DNA-replication machinery. Also participates in the removal of DNA-lesion-associated R-loop. Plays an essential role for establishing pluripotency during embryogenesis and for pluripotency maintenance in embryonic stem cells. Mechanistically, prevents the polycomb repressive complex 2 (PRC2) from accessing rDNA loci and protects the active chromatin status in nucleolus. The polypeptide is ATP-dependent RNA helicase DDX18 (DDX18) (Homo sapiens (Human)).